A 182-amino-acid polypeptide reads, in one-letter code: UPF0301 protein NMCC_1249 (182 aa).

It belongs to the UPF0301 (AlgH) family.

In Neisseria meningitidis serogroup C (strain 053442), this protein is UPF0301 protein NMCC_1249.